A 321-amino-acid polypeptide reads, in one-letter code: Ubiquitin-conjugating enzyme E2 U (321 aa).

Residues 4–153 form the UBC core domain; sequence RAYLLLHRDF…LRLFNRPLQM (150 aa). Catalysis depends on C89, which acts as the Glycyl thioester intermediate. The segment at 285 to 321 is disordered; sequence WKSDTSLYENDTDEPREEEVEDLISWTNTLNTNTSED. The span at 294–306 shows a compositional bias: acidic residues; sequence NDTDEPREEEVED. The span at 309–321 shows a compositional bias: polar residues; the sequence is SWTNTLNTNTSED.

Belongs to the ubiquitin-conjugating enzyme family. In terms of processing, autoubiquitinated in vitro in the presence of UBR5.

The catalysed reaction is S-ubiquitinyl-[E1 ubiquitin-activating enzyme]-L-cysteine + [E2 ubiquitin-conjugating enzyme]-L-cysteine = [E1 ubiquitin-activating enzyme]-L-cysteine + S-ubiquitinyl-[E2 ubiquitin-conjugating enzyme]-L-cysteine.. It participates in protein modification; protein ubiquitination. Catalyzes the covalent attachment of ubiquitin to other proteins. This Homo sapiens (Human) protein is Ubiquitin-conjugating enzyme E2 U (UBE2U).